We begin with the raw amino-acid sequence, 122 residues long: Alpha-amylase/trypsin inhibitor (122 aa).

Disulfide bonds link C6/C55, C20/C44, C29/C85, C45/C103, and C57/C114.

It belongs to the protease inhibitor I6 (cereal trypsin/alpha-amylase inhibitor) family. In terms of tissue distribution, seeds.

Its subcellular location is the secreted. Its function is as follows. May play a protective role against endo- and exogenous hydrolytic activities in the Ragi seeds. This is Alpha-amylase/trypsin inhibitor from Eleusine coracana (Indian finger millet).